A 384-amino-acid chain; its full sequence is Urea transporter 1 (384 aa).

Residues methionine 1–arginine 23 are disordered. The next 5 helical transmembrane spans lie at isoleucine 61 to leucine 81, proline 85 to leucine 105, alanine 111 to tyrosine 131, phenylalanine 138 to alanine 158, and leucine 168 to histidine 188. N-linked (GlcNAc...) asparagine glycosylation is present at asparagine 206. A run of 3 helical transmembrane segments spans residues glycine 237–isoleucine 257, glycine 279–leucine 299, and valine 327–leucine 347.

Belongs to the urea transporter family. Homotrimer; each subunit contains a pore through which urea permeates. Identified in a complex with STOM.

It is found in the cell membrane. The protein localises to the basolateral cell membrane. The enzyme catalyses urea(in) = urea(out). Functionally, mediates the transport of urea driven by a concentration gradient across the cell membranes of erythrocytes and the renal inner medullary collecting duct which is critical to the urinary concentrating mechanism. Facilitates water transport in erythrocytes. This chain is Urea transporter 1 (SLC14A1), found in Capra hircus (Goat).